The following is a 501-amino-acid chain: Cytokinin dehydrogenase 2 (501 aa).

The N-terminal stretch at Met-1–Gly-22 is a signal peptide. Asn-32 and Asn-51 each carry an N-linked (GlcNAc...) asparagine glycan. Positions Thr-53 to Ala-226 constitute an FAD-binding PCMH-type domain. FAD-binding residues include Ala-87, Gly-89, and Gly-91. Pros-8alpha-FAD histidine is present on His-92. FAD-binding residues include Ser-93 and Gln-97. The N-linked (GlcNAc...) asparagine glycan is linked to Asn-107. FAD is bound by residues Asp-150, Thr-155, Ser-161, Ile-165, Ile-216, Tyr-460, Ser-495, and Gln-498.

This sequence belongs to the oxygen-dependent FAD-linked oxidoreductase family. The cofactor is FAD. Expressed in the shoot apex, in stipules, and occasionally in the most apical part of the inflorescence stems. Not detected in roots.

The protein resides in the endoplasmic reticulum. Its subcellular location is the secreted. The protein localises to the extracellular space. The catalysed reaction is N(6)-dimethylallyladenine + A + H2O = 3-methyl-2-butenal + adenine + AH2. Functionally, catalyzes the oxidation of cytokinins, a family of N(6)-substituted adenine derivatives that are plant hormones, where the substituent is an isopentenyl group. Modulates asymmetric cytokinin signaling in emerged lateral roots. Its activity determines cell elongation and number in emerged lateral roots and defines angular growth of lateral roots. In Arabidopsis thaliana (Mouse-ear cress), this protein is Cytokinin dehydrogenase 2 (CKX2).